The following is a 299-amino-acid chain: Homeobox protein Nkx-2.5 (299 aa).

Residues 90-119 (KDPKDHKKDICPLQKTLEHDKREAEDPERP) are compositionally biased toward basic and acidic residues. The segment at 90 to 128 (KDPKDHKKDICPLQKTLEHDKREAEDPERPRQRKRRKPR) is disordered. The homeobox DNA-binding region spans 124 to 183 (RRKPRVLFSQAQVYELERRFKQQKYLSAPERDHLANVLKLTSTQVKIWFQNRRYKCKRQR).

The protein belongs to the NK-2 homeobox family. As to quaternary structure, homodimer (via the homeobox); binds DNA as homodimer. In terms of tissue distribution, heart and gut tissue.

It is found in the nucleus. In terms of biological role, transcription factor required for the development of the heart and the spleen. Implicated in commitment to and/or differentiation of the myocardial lineage. May regulate the expression of genes involved in cardiogenesis and play a role in the formation of gut and the pharyngeal region. Binds to the core DNA motif of promoter. In Xenopus laevis (African clawed frog), this protein is Homeobox protein Nkx-2.5 (nkx-2.5).